The chain runs to 100 residues: Urease subunit gamma (100 aa).

The protein belongs to the urease gamma subunit family. Heterotrimer of UreA (gamma), UreB (beta) and UreC (alpha) subunits. Three heterotrimers associate to form the active enzyme.

It localises to the cytoplasm. The catalysed reaction is urea + 2 H2O + H(+) = hydrogencarbonate + 2 NH4(+). It functions in the pathway nitrogen metabolism; urea degradation; CO(2) and NH(3) from urea (urease route): step 1/1. In Thioalkalivibrio sulfidiphilus (strain HL-EbGR7), this protein is Urease subunit gamma.